Here is a 335-residue protein sequence, read N- to C-terminus: Holliday junction branch migration complex subunit RuvB (335 aa).

The large ATPase domain (RuvB-L) stretch occupies residues 4 to 184 (ADRIISGQAK…FGIVQRLEFY (181 aa)). ATP-binding positions include Ile-23, Arg-24, Gly-65, Lys-68, Thr-69, Thr-70, 131 to 133 (EDY), Arg-174, Tyr-184, and Arg-221. Residue Thr-69 coordinates Mg(2+). The tract at residues 185–255 (SVEDLTSIVA…VAKQALSMLD (71 aa)) is small ATPAse domain (RuvB-S). The interval 258–335 (DAGFDYLDRK…RHFGLQKLSD (78 aa)) is head domain (RuvB-H). DNA contacts are provided by Arg-294, Arg-313, and Arg-318.

The protein belongs to the RuvB family. In terms of assembly, homohexamer. Forms an RuvA(8)-RuvB(12)-Holliday junction (HJ) complex. HJ DNA is sandwiched between 2 RuvA tetramers; dsDNA enters through RuvA and exits via RuvB. An RuvB hexamer assembles on each DNA strand where it exits the tetramer. Each RuvB hexamer is contacted by two RuvA subunits (via domain III) on 2 adjacent RuvB subunits; this complex drives branch migration. In the full resolvosome a probable DNA-RuvA(4)-RuvB(12)-RuvC(2) complex forms which resolves the HJ.

It localises to the cytoplasm. The enzyme catalyses ATP + H2O = ADP + phosphate + H(+). In terms of biological role, the RuvA-RuvB-RuvC complex processes Holliday junction (HJ) DNA during genetic recombination and DNA repair, while the RuvA-RuvB complex plays an important role in the rescue of blocked DNA replication forks via replication fork reversal (RFR). RuvA specifically binds to HJ cruciform DNA, conferring on it an open structure. The RuvB hexamer acts as an ATP-dependent pump, pulling dsDNA into and through the RuvAB complex. RuvB forms 2 homohexamers on either side of HJ DNA bound by 1 or 2 RuvA tetramers; 4 subunits per hexamer contact DNA at a time. Coordinated motions by a converter formed by DNA-disengaged RuvB subunits stimulates ATP hydrolysis and nucleotide exchange. Immobilization of the converter enables RuvB to convert the ATP-contained energy into a lever motion, pulling 2 nucleotides of DNA out of the RuvA tetramer per ATP hydrolyzed, thus driving DNA branch migration. The RuvB motors rotate together with the DNA substrate, which together with the progressing nucleotide cycle form the mechanistic basis for DNA recombination by continuous HJ branch migration. Branch migration allows RuvC to scan DNA until it finds its consensus sequence, where it cleaves and resolves cruciform DNA. This Haemophilus influenzae (strain PittEE) protein is Holliday junction branch migration complex subunit RuvB.